A 192-amino-acid chain; its full sequence is Molybdenum cofactor guanylyltransferase (192 aa).

Residues 10 to 12 (LAG), Lys23, Asn51, Asp69, and Asp99 contribute to the GTP site. Position 99 (Asp99) interacts with Mg(2+).

Belongs to the MobA family. Monomer. It depends on Mg(2+) as a cofactor.

It is found in the cytoplasm. It carries out the reaction Mo-molybdopterin + GTP + H(+) = Mo-molybdopterin guanine dinucleotide + diphosphate. Its function is as follows. Transfers a GMP moiety from GTP to Mo-molybdopterin (Mo-MPT) cofactor (Moco or molybdenum cofactor) to form Mo-molybdopterin guanine dinucleotide (Mo-MGD) cofactor. The protein is Molybdenum cofactor guanylyltransferase of Haemophilus influenzae (strain ATCC 51907 / DSM 11121 / KW20 / Rd).